The sequence spans 104 residues: METIAFRMHLHPGKRDEYRRRHDAIWPELADALRAAGISDYWIFLDDDTHHLFAVLKRPADHRIAQLAETDVMRRWWAYMADLMATGPDGRPVEKALEPMFHLE.

A substrate-binding site is contributed by Tyr18. His22 serves as the catalytic Proton donor. Residues Tyr41 and 76–77 contribute to the substrate site; that span reads WW.

The protein belongs to the rhamnose mutarotase family. Homodimer.

It is found in the cytoplasm. It carries out the reaction alpha-L-rhamnose = beta-L-rhamnose. It functions in the pathway carbohydrate metabolism; L-rhamnose metabolism. Involved in the anomeric conversion of L-rhamnose. In Burkholderia cenocepacia (strain HI2424), this protein is L-rhamnose mutarotase.